A 371-amino-acid polypeptide reads, in one-letter code: Chorismate synthase (371 aa).

NADP(+)-binding residues include Arg48 and Arg54. Residues 125-127 (RSS), 238-239 (NA), Gly278, 293-297 (KPTSS), and Arg319 contribute to the FMN site.

The protein belongs to the chorismate synthase family. In terms of assembly, homotetramer. The cofactor is FMNH2.

The enzyme catalyses 5-O-(1-carboxyvinyl)-3-phosphoshikimate = chorismate + phosphate. The protein operates within metabolic intermediate biosynthesis; chorismate biosynthesis; chorismate from D-erythrose 4-phosphate and phosphoenolpyruvate: step 7/7. In terms of biological role, catalyzes the anti-1,4-elimination of the C-3 phosphate and the C-6 proR hydrogen from 5-enolpyruvylshikimate-3-phosphate (EPSP) to yield chorismate, which is the branch point compound that serves as the starting substrate for the three terminal pathways of aromatic amino acid biosynthesis. This reaction introduces a second double bond into the aromatic ring system. The chain is Chorismate synthase from Polynucleobacter asymbioticus (strain DSM 18221 / CIP 109841 / QLW-P1DMWA-1) (Polynucleobacter necessarius subsp. asymbioticus).